The following is a 263-amino-acid chain: (E)-2-((N-methylformamido)methylene)succinate hydrolase (263 aa).

Catalysis depends on Ser96, which acts as the Nucleophile. Residues Asn120 and His241 contribute to the active site.

This sequence belongs to the AB hydrolase superfamily. Monomer.

It carries out the reaction (E)-2-((N-methylformamido) methylene)succinate + 2 H2O + H(+) = succinate semialdehyde + methylamine + formate + CO2. Its function is as follows. Involved in the degradation of the pyridine ring of trigonelline (TG; N-methylnicotinate) into succinate and methylamine as carbon and nitrogen sources, respectively. Catalyzes the hydrolysis of (E)-2-((N-methylformamido)methylene)succinate (MFMS) into formic acid, succinate semialdehyde (SSA), methylamine and carbon dioxide. This chain is (E)-2-((N-methylformamido)methylene)succinate hydrolase, found in Acinetobacter baylyi (strain ATCC 33305 / BD413 / ADP1).